An 883-amino-acid chain; its full sequence is DNA topoisomerase 1 (883 aa).

One can recognise a Toprim domain in the interval 2–126; sequence PKLVIVESPT…TKRMVFHEIT (125 aa). Positions 8 and 95 each coordinate Mg(2+). In terms of domain architecture, Topo IA-type catalytic spans 141 to 583; sequence DQRLVHAQET…QFYRGDRGLE (443 aa). The tract at residues 175–180 is interaction with DNA; the sequence is SAGRVQ. Residues 271-294 form a disordered region; sequence SLEEKPTTRKPAPPFTTSTLQQES. Tyr-320 serves as the catalytic O-(5'-phospho-DNA)-tyrosine intermediate. The tract at residues 842 to 883 is disordered; the sequence is AKAGQAKAKGGRRSTGTPKSGETKARTTKTTKKTTTRRTTSR. Positions 867–883 are enriched in basic residues; it reads RTTKTTKKTTTRRTTSR.

It belongs to the type IA topoisomerase family. In terms of assembly, monomer. Mg(2+) serves as cofactor.

It catalyses the reaction ATP-independent breakage of single-stranded DNA, followed by passage and rejoining.. Its function is as follows. Releases the supercoiling and torsional tension of DNA, which is introduced during the DNA replication and transcription, by transiently cleaving and rejoining one strand of the DNA duplex. Introduces a single-strand break via transesterification at a target site in duplex DNA. The scissile phosphodiester is attacked by the catalytic tyrosine of the enzyme, resulting in the formation of a DNA-(5'-phosphotyrosyl)-enzyme intermediate and the expulsion of a 3'-OH DNA strand. The free DNA strand then undergoes passage around the unbroken strand, thus removing DNA supercoils. Finally, in the religation step, the DNA 3'-OH attacks the covalent intermediate to expel the active-site tyrosine and restore the DNA phosphodiester backbone. This Synechococcus elongatus (strain ATCC 33912 / PCC 7942 / FACHB-805) (Anacystis nidulans R2) protein is DNA topoisomerase 1.